Here is a 391-residue protein sequence, read N- to C-terminus: MHVAHLSLVDYRSYPTLELDLRPGTTTFVGLNGQGKTNLVEAIGYVATLGSHRVSGDAPLVRQGAERAVVRAQLERGGRRALVELEITPGKANRARLNGNPVRRTRDVLGVLRTVLFAPEDLALVKGDPGERRRYLDELLVTRWPRIAGVRADYDRILRQRTALLKSAGSAMRSGRADTHTLDVWDEHLATTGAELLSARLALLADLRSPTDSAYRAVSGGQGDLELGYRSSLPLLAEGVATTPGGEAPTRDALREALLASMLEQRKSELDRGVCLVGPHRDDLVLTLGGMPAKGYASHGESWSVALGLRLASYRLLLADDEVDDPGGPVLVLDDVFAELDAGRRERLSEVVADAEQVLVTAAVPEDVPAALRGEHTDRVHVTSGAAVRGD.

30 to 37 is a binding site for ATP; the sequence is GLNGQGKT.

Belongs to the RecF family.

The protein localises to the cytoplasm. Functionally, the RecF protein is involved in DNA metabolism; it is required for DNA replication and normal SOS inducibility. RecF binds preferentially to single-stranded, linear DNA. It also seems to bind ATP. The sequence is that of DNA replication and repair protein RecF from Kineococcus radiotolerans (strain ATCC BAA-149 / DSM 14245 / SRS30216).